The primary structure comprises 359 residues: Caffeic acid 3-O-methyltransferase (359 aa).

Residue 126-132 (MNQDKVL) participates in substrate binding. The substrate binding stretch occupies residues 158–176 (AFEYHGTDPRFNKVFNRGM). Gly-204, Asp-227, Asp-247, Met-248, and Lys-261 together coordinate S-adenosyl-L-methionine. Residue His-265 is the Proton acceptor of the active site.

It belongs to the class I-like SAM-binding methyltransferase superfamily. Cation-independent O-methyltransferase family. COMT subfamily. In terms of assembly, homodimer. Fruit. Not expressed in leaf.

It catalyses the reaction (E)-caffeate + S-adenosyl-L-methionine = (E)-ferulate + S-adenosyl-L-homocysteine + H(+). Its pathway is aromatic compound metabolism; phenylpropanoid biosynthesis. In terms of biological role, catalyzes the conversion of caffeic acid to ferulic acid and of 5-hydroxyferulic acid to sinapic acid. The resulting products may subsequently be converted to the corresponding alcohols that are incorporated into lignins. In Capsicum annuum (Capsicum pepper), this protein is Caffeic acid 3-O-methyltransferase (COMT).